A 121-amino-acid polypeptide reads, in one-letter code: Basic phospholipase A2 BmjeTX-I (121 aa).

Intrachain disulfides connect C26-C114, C28-C45, C44-C95, C50-C121, C51-C88, C58-C82, and C76-C86. Ca(2+) is bound by residues Y27, G29, and G31. H48 is a catalytic residue. D49 contacts Ca(2+). D89 is an active-site residue.

The cofactor is Ca(2+). Expressed by the venom gland.

It localises to the secreted. The enzyme catalyses a 1,2-diacyl-sn-glycero-3-phosphocholine + H2O = a 1-acyl-sn-glycero-3-phosphocholine + a fatty acid + H(+). Its function is as follows. Snake venom phospholipase A2 (PLA2) that induces a slight blockade of neuromuscular contraction in an indirectly stimulated chick biventer cervicis nerve-muscle preparation. Does not inhibit contraction of chick biventer cervicic nerve-muscle preparation in response to treatment with acetylcholine or KCl. The neuromuscular blockade is mediated by inhibitory action at the presynaptic motor nerve endings. Lyses skeletal myoblasts and myotubes in vitro, and intramuscular injection causes local muscle necrosis. Induces edema in the mouse foot pad. Induces a transient increase of IL-6 levels. PLA2 catalyzes the calcium-dependent hydrolysis of the 2-acyl groups in 3-sn-phosphoglycerides. This is Basic phospholipase A2 BmjeTX-I from Bothrops marajoensis (Marajo lancehead).